The primary structure comprises 171 residues: Disulfide bond formation protein B (171 aa).

Topologically, residues 1-13 (MSALTRFAQSRLA) are cytoplasmic. A helical membrane pass occupies residues 14 to 30 (WTLLLLTAVGLEACALF). Residues 31–48 (FQHVMKLDPCVMCIYQRL) are Periplasmic-facing. Cysteines 40 and 43 form a disulfide. The chain crosses the membrane as a helical span at residues 49 to 64 (AVLGVLTAGLIGVVGH). At 65-71 (QFRLLRF) the chain is on the cytoplasmic side. Residues 72–89 (LGVLLWGVSAAWGLKLAL) form a helical membrane-spanning segment. The Periplasmic segment spans residues 90-144 (ELVEMQTNPSPFSTCSFLPEFPEWMPLHEWFPSVFLPTGMCTDIPWEMFGITMSQ). Cys-104 and Cys-130 are oxidised to a cystine. Residues 145 to 163 (WMVVAFSTYLIALVVFIVP) form a helical membrane-spanning segment. Residues 164 to 171 (ALMPTKKA) are Cytoplasmic-facing.

This sequence belongs to the DsbB family.

The protein localises to the cell inner membrane. In terms of biological role, required for disulfide bond formation in some periplasmic proteins. Acts by oxidizing the DsbA protein. This chain is Disulfide bond formation protein B, found in Shewanella loihica (strain ATCC BAA-1088 / PV-4).